The primary structure comprises 27 residues: Caerulein precursor fragment R4 (27 aa).

In terms of tissue distribution, expressed by the skin glands.

The protein localises to the secreted. In terms of biological role, antimicrobial peptide. The sequence is that of Caerulein precursor fragment R4 from Xenopus ruwenzoriensis (Uganda clawed frog).